Consider the following 826-residue polypeptide: E3 ubiquitin-protein ligase SH3RF1 (826 aa).

The RING-type zinc finger occupies 12–53 (CPVCLERLDASAKVLPCQHTFCKRCLLGIVSSRKELRCPECR). Positions 80–130 (PRKAGDGGSAGNSTNALRAQGSVTTNGGLNDAQNTQSGQQRIQARSPPVRG) are disordered. The span at 90-122 (GNSTNALRAQGSVTTNGGLNDAQNTQSGQQRIQ) shows a compositional bias: polar residues. SH3 domains are found at residues 132-191 (PQLP…IIKP) and 194-257 (QPPP…FNSA). Positions 266–319 (KPSGADTGEGSSGTSHSGNSQKQADAKKNTKKRHSFTSLTMSNKSSQSVQNRHS) are disordered. Residues 273-285 (GEGSSGTSHSGNS) are compositionally biased toward low complexity. Positions 301–317 (FTSLTMSNKSSQSVQNR) are enriched in polar residues. The 62-residue stretch at 398–459 (ARPSVFIAIY…PGNYVAPVTR (62 aa)) folds into the SH3 3 domain. Disordered regions lie at residues 647–694 (NSAA…QTNS) and 725–759 (DSVSASTPAQDNRKPASLDNNIPIAPPPRQPCSSL). Positions 652–663 (KQDKDSKKEKKG) are enriched in basic and acidic residues. An SH3 4 domain is found at 767 to 826 (RPCERYRVMVSYPPQSEAELELKEGDIVFVHKKREDGWFKGTLQRNGKTGLFPGSFVENI).

This sequence belongs to the SH3RF family. Post-translationally, autoubiquitinated. Ubiquitinated by SH3RF2, leading to proteasome-mediated degradation.

It localises to the cytoplasm. The protein localises to the perinuclear region. Its subcellular location is the cell projection. It is found in the lamellipodium. The protein resides in the golgi apparatus. It localises to the trans-Golgi network. It catalyses the reaction S-ubiquitinyl-[E2 ubiquitin-conjugating enzyme]-L-cysteine + [acceptor protein]-L-lysine = [E2 ubiquitin-conjugating enzyme]-L-cysteine + N(6)-ubiquitinyl-[acceptor protein]-L-lysine.. It participates in protein modification; protein ubiquitination. In terms of biological role, has E3 ubiquitin-protein ligase activity. In the absence of an external substrate, it can catalyze self-ubiquitination. Acts as a scaffold protein that contributes to the effective activation of the JNK signaling pathway. Plays an essential role in the anterior neural development. The polypeptide is E3 ubiquitin-protein ligase SH3RF1 (sh3rf1) (Xenopus laevis (African clawed frog)).